The chain runs to 576 residues: A-type ATP synthase subunit A (576 aa).

228 to 235 (GGFGTGKT) is a binding site for ATP.

The protein belongs to the ATPase alpha/beta chains family. Has multiple subunits with at least A(3), B(3), C, D, E, F, H, I and proteolipid K(x).

The protein resides in the cell membrane. It catalyses the reaction ATP + H2O + 4 H(+)(in) = ADP + phosphate + 5 H(+)(out). Its function is as follows. Component of the A-type ATP synthase that produces ATP from ADP in the presence of a proton gradient across the membrane. The A chain is the catalytic subunit. This is A-type ATP synthase subunit A from Methanothrix thermoacetophila (strain DSM 6194 / JCM 14653 / NBRC 101360 / PT) (Methanosaeta thermophila).